A 317-amino-acid chain; its full sequence is Melanocyte-stimulating hormone receptor (317 aa).

The Extracellular segment spans residues methionine 1 to glutamate 37. 2 N-linked (GlcNAc...) asparagine glycosylation sites follow: asparagine 15 and asparagine 29. A helical transmembrane segment spans residues valine 38–isoleucine 63. At alanine 64–proline 72 the chain is on the cytoplasmic side. The helical transmembrane segment at methionine 73 to leucine 93 threads the bilayer. The Extracellular portion of the chain corresponds to glutamate 94 to asparagine 118. Residues valine 119–methionine 140 traverse the membrane as a helical segment. At aspartate 141 to tryptophan 163 the chain is on the cytoplasmic side. A helical transmembrane segment spans residues alanine 164–tyrosine 183. The Extracellular portion of the chain corresponds to aspartate 184–cysteine 191. The helical transmembrane segment at leucine 192–leucine 211 threads the bilayer. At threonine 212 to alanine 240 the chain is on the cytoplasmic side. Residues alanine 241 to valine 266 form a helical membrane-spanning segment. Over cysteine 267 to asparagine 279 the chain is Extracellular. The helical transmembrane segment at phenylalanine 280–phenylalanine 300 threads the bilayer. The Cytoplasmic segment spans residues arginine 301–tryptophan 317.

It belongs to the G-protein coupled receptor 1 family. In terms of assembly, interacts with MGRN1, but does not undergo MGRN1-mediated ubiquitination; this interaction competes with GNAS-binding and thus inhibits agonist-induced cAMP production. Interacts with OPN3; the interaction results in a decrease in MC1R-mediated cAMP signaling and ultimately a decrease in melanin production in melanocytes.

The protein resides in the cell membrane. Its function is as follows. Receptor for MSH (alpha, beta and gamma) and ACTH. The activity of this receptor is mediated by G proteins which activate adenylate cyclase. Mediates melanogenesis, the production of eumelanin (black/brown) and phaeomelanin (red/yellow), via regulation of cAMP signaling in melanocytes. The chain is Melanocyte-stimulating hormone receptor (MC1R) from Galago senegalensis (Northern lesser bushbaby).